We begin with the raw amino-acid sequence, 109 residues long: uncharacterized protein (109 aa).

The helical transmembrane segment at 29–49 threads the bilayer; the sequence is ITIIITLVIIFIIFTLIILYF.

The protein resides in the membrane. This is an uncharacterized protein from Sputnik virophage.